The following is a 290-amino-acid chain: MPLDIKTELMGLIGYPLQHSLSPLMHNLTLKKMGLNCIYLALEIEEGKLPEIPSAIRTLNFRGLNVTIPYKEKIIPFLDELSPEAAAFGAVNVIKNKNGHLHGYNTDGRGFVEALREEGIDPGERALFIGAGGAARSVAFALAGLGVSRLDFLDLDFSRARQLAEFITSRSSSLASAFLMNTLEFQRLSRTASIIINCSPVGMFPDTGKSPVSKEDLRGSRAVLCDLIYNPLQSRFLSLGQELGLETMNGLGMFVQQGALTLEILLGQKPPLDYMKEVVQNQLEKRVDPD.

Residues 20 to 22 (SLS) and Thr67 each bind shikimate. The active-site Proton acceptor is the Lys71. Positions 92 and 107 each coordinate shikimate. Residues 130–134 (GAGGA) and Leu227 contribute to the NADP(+) site. Residue Tyr229 participates in shikimate binding. Gly250 contributes to the NADP(+) binding site.

Belongs to the shikimate dehydrogenase family. Homodimer.

It carries out the reaction shikimate + NADP(+) = 3-dehydroshikimate + NADPH + H(+). The protein operates within metabolic intermediate biosynthesis; chorismate biosynthesis; chorismate from D-erythrose 4-phosphate and phosphoenolpyruvate: step 4/7. Its function is as follows. Involved in the biosynthesis of the chorismate, which leads to the biosynthesis of aromatic amino acids. Catalyzes the reversible NADPH linked reduction of 3-dehydroshikimate (DHSA) to yield shikimate (SA). The protein is Shikimate dehydrogenase (NADP(+)) of Syntrophomonas wolfei subsp. wolfei (strain DSM 2245B / Goettingen).